The following is a 331-amino-acid chain: MSRPSSAGGAAGGLGAGKAGGSKHGGSGGTTASAAAAAAAAAAAAAAAAAAAGVSGSVAGSGTVPAAAVALPVAALPGQSPELTALFECPVCFDYVLPPILQCQAGHLVCNQCRQKLSCCPTCRGPLTPSIRNLAMEKVASTLPFPCKYSSAGCLLSLHHSEKPEHEEVCEFRPYTCPCPGASCKWQGSLEEVMPHLMHAHKSITTLQGEDIVFLATDINLPGAVDWVMMQSCFGHHFMLVLEKQEKYEGHQQFFAIVLLIGTRKQAENFAYRLELNGNRRRLTWEATPRSIHDGVAAAIMNSDCLVFDTSIAHLFADNGNLGINVTISMC.

Positions 1–26 (MSRPSSAGGAAGGLGAGKAGGSKHGG) are disordered. Over residues 9–26 (GAAGGLGAGKAGGSKHGG) the composition is skewed to gly residues. The RING-type zinc finger occupies 89–124 (CPVCFDYVLPPILQCQAGHLVCNQCRQKLSCCPTCR). The interval 139 to 331 (VASTLPFPCK…LGINVTISMC (193 aa)) is SBD. An SIAH-type zinc finger spans residues 142–202 (TLPFPCKYSS…VMPHLMHAHK (61 aa)). The Zn(2+) site is built by Cys-147, Cys-154, His-166, Cys-170, Cys-177, Cys-184, His-196, and His-201.

It belongs to the SINA (Seven in absentia) family. Homodimer. As to expression, in embryos it is expressed in all blastomeres starting at the mid-blastulla. After 20 somite stage, it is expressed mainly in the posterior part. Expressed in brain, including the eye, the cranial cavity, otic vesicle, optic chiasm and in the gut.

It catalyses the reaction S-ubiquitinyl-[E2 ubiquitin-conjugating enzyme]-L-cysteine + [acceptor protein]-L-lysine = [E2 ubiquitin-conjugating enzyme]-L-cysteine + N(6)-ubiquitinyl-[acceptor protein]-L-lysine.. It participates in protein modification; protein ubiquitination. Functionally, E3 ubiquitin-protein ligase that mediates ubiquitination and subsequent proteasomal degradation of target proteins. E3 ubiquitin ligases accept ubiquitin from an E2 ubiquitin-conjugating enzyme in the form of a thioester and then directly transfers the ubiquitin to targeted substrates. It probably triggers the ubiquitin-mediated degradation of different substrates. Induces cellular growth arrest by inhibiting the G2/M transition. May play a role in the regulation of the cellular clock function. This Danio rerio (Zebrafish) protein is E3 ubiquitin-protein ligase Siah2 (siah2l).